Here is a 156-residue protein sequence, read N- to C-terminus: Ribosomal RNA large subunit methyltransferase H (156 aa).

S-adenosyl-L-methionine is bound by residues L73, G104, and 123–128 (VSSLTL).

The protein belongs to the RNA methyltransferase RlmH family. As to quaternary structure, homodimer.

The protein resides in the cytoplasm. The enzyme catalyses pseudouridine(1915) in 23S rRNA + S-adenosyl-L-methionine = N(3)-methylpseudouridine(1915) in 23S rRNA + S-adenosyl-L-homocysteine + H(+). Its function is as follows. Specifically methylates the pseudouridine at position 1915 (m3Psi1915) in 23S rRNA. The polypeptide is Ribosomal RNA large subunit methyltransferase H (Paraburkholderia phytofirmans (strain DSM 17436 / LMG 22146 / PsJN) (Burkholderia phytofirmans)).